A 210-amino-acid polypeptide reads, in one-letter code: Orotate phosphoribosyltransferase (210 aa).

5-phospho-alpha-D-ribose 1-diphosphate is bound by residues Arg-94, Lys-98, His-100, and 120-128; that span reads EDLISTGGS. Position 124 (Ser-124) interacts with orotate.

The protein belongs to the purine/pyrimidine phosphoribosyltransferase family. PyrE subfamily. Homodimer. The cofactor is Mg(2+).

It carries out the reaction orotidine 5'-phosphate + diphosphate = orotate + 5-phospho-alpha-D-ribose 1-diphosphate. It participates in pyrimidine metabolism; UMP biosynthesis via de novo pathway; UMP from orotate: step 1/2. Catalyzes the transfer of a ribosyl phosphate group from 5-phosphoribose 1-diphosphate to orotate, leading to the formation of orotidine monophosphate (OMP). The polypeptide is Orotate phosphoribosyltransferase (Bacillus anthracis (strain A0248)).